A 70-amino-acid chain; its full sequence is Eglin C (70 aa).

It belongs to the protease inhibitor I13 (potato type I serine protease inhibitor) family.

Functionally, inhibits both elastase and cathepsin G. The polypeptide is Eglin C (Hirudo medicinalis (Medicinal leech)).